Consider the following 204-residue polypeptide: MTLTVTDLAIARGGIPVLEGLSFTLTPGRALILRGPNGAGKTTLLRTLAGLQPPLAGRIEGAEDKIAYAGHSDGLKPTLSVTENLLFWAAVFGGRDITPALEGFALGDLADRHAGNLSAGQKRRLGLARLLVTGRPIWMLDEPTVSLDRDAVAMFADTVRAHLGQGGSALIATHIDLGLDAEVLDVGPYRARPAPLDDPDGDFL.

The region spanning 3-204 (LTVTDLAIAR…PLDDPDGDFL (202 aa)) is the ABC transporter domain. 35 to 42 (GPNGAGKT) contributes to the ATP binding site.

The protein belongs to the ABC transporter superfamily. CcmA exporter (TC 3.A.1.107) family. As to quaternary structure, the complex is composed of two ATP-binding proteins (CcmA) and two transmembrane proteins (CcmB).

It is found in the cell membrane. The enzyme catalyses heme b(in) + ATP + H2O = heme b(out) + ADP + phosphate + H(+). Part of the ABC transporter complex CcmAB involved in the biogenesis of c-type cytochromes; once thought to export heme, this seems not to be the case, but its exact role is uncertain. Responsible for energy coupling to the transport system. This is Cytochrome c biogenesis ATP-binding export protein CcmA from Ruegeria pomeroyi (strain ATCC 700808 / DSM 15171 / DSS-3) (Silicibacter pomeroyi).